Here is a 380-residue protein sequence, read N- to C-terminus: O-phospho-L-seryl-tRNA:Cys-tRNA synthase (380 aa).

Pyridoxal 5'-phosphate contacts are provided by residues 86 to 87, Asn192, and 215 to 217; these read AR and SGH. Position 218 is an N6-(pyridoxal phosphate)lysine (Lys218).

This sequence belongs to the SepCysS family. In terms of assembly, homodimer. Interacts with SepRS. Requires pyridoxal 5'-phosphate as cofactor.

The enzyme catalyses O-phospho-L-seryl-tRNA(Cys) + hydrogen sulfide + H(+) = L-cysteinyl-tRNA(Cys) + phosphate. In terms of biological role, converts O-phospho-L-seryl-tRNA(Cys) (Sep-tRNA(Cys)) to L-cysteinyl-tRNA(Cys) (Cys-tRNA(Cys)). This is O-phospho-L-seryl-tRNA:Cys-tRNA synthase from Methanococcus maripaludis (strain C6 / ATCC BAA-1332).